A 212-amino-acid polypeptide reads, in one-letter code: MTKGILGRKVGMTQIFTKDGILVPVTVVEATPNVVMQVKTVESDGYEAVQLGYQDKREVLSNKPEKGHADKAKTSPKRFIREIRGVELKDYEVGSEVTVDTFKEGDVVNVTGTSRGHGYQGNIKRWGQSRGPETHGSRYHRIPGSMGSIINRVPKGKRLPGHMGVKKVTIENLVIEKVVADKNVLMIKGNVPGAKNSLIVVKTASKAVKADK.

The interval 119–147 (YQGNIKRWGQSRGPETHGSRYHRIPGSMG) is disordered.

Belongs to the universal ribosomal protein uL3 family. In terms of assembly, part of the 50S ribosomal subunit. Forms a cluster with proteins L14 and L19.

Functionally, one of the primary rRNA binding proteins, it binds directly near the 3'-end of the 23S rRNA, where it nucleates assembly of the 50S subunit. The chain is Large ribosomal subunit protein uL3 from Lactobacillus acidophilus (strain ATCC 700396 / NCK56 / N2 / NCFM).